The primary structure comprises 299 residues: Methionyl-tRNA formyltransferase (299 aa).

Residue Ser109–Pro112 participates in (6S)-5,6,7,8-tetrahydrofolate binding.

This sequence belongs to the Fmt family.

It carries out the reaction L-methionyl-tRNA(fMet) + (6R)-10-formyltetrahydrofolate = N-formyl-L-methionyl-tRNA(fMet) + (6S)-5,6,7,8-tetrahydrofolate + H(+). Attaches a formyl group to the free amino group of methionyl-tRNA(fMet). The formyl group appears to play a dual role in the initiator identity of N-formylmethionyl-tRNA by promoting its recognition by IF2 and preventing the misappropriation of this tRNA by the elongation apparatus. This chain is Methionyl-tRNA formyltransferase, found in Dinoroseobacter shibae (strain DSM 16493 / NCIMB 14021 / DFL 12).